The chain runs to 507 residues: Flagellar hook-associated protein 1 (507 aa).

The protein belongs to the flagella basal body rod proteins family.

It localises to the secreted. Its subcellular location is the bacterial flagellum. The chain is Flagellar hook-associated protein 1 (flgK) from Bacillus subtilis (strain 168).